The following is a 346-amino-acid chain: S-adenosylmethionine:tRNA ribosyltransferase-isomerase (346 aa).

Belongs to the QueA family. Monomer.

The protein localises to the cytoplasm. It carries out the reaction 7-aminomethyl-7-carbaguanosine(34) in tRNA + S-adenosyl-L-methionine = epoxyqueuosine(34) in tRNA + adenine + L-methionine + 2 H(+). Its pathway is tRNA modification; tRNA-queuosine biosynthesis. Transfers and isomerizes the ribose moiety from AdoMet to the 7-aminomethyl group of 7-deazaguanine (preQ1-tRNA) to give epoxyqueuosine (oQ-tRNA). This Neisseria meningitidis serogroup C (strain 053442) protein is S-adenosylmethionine:tRNA ribosyltransferase-isomerase.